A 330-amino-acid polypeptide reads, in one-letter code: Transcription factor TGA2 (330 aa).

A disordered region spans residues 1 to 48 (MADTSPRTDVSTDDDTDHPDLGSEGALVNTAASDSSDRSKGKMDQKTL). The span at 35–47 (SSDRSKGKMDQKT) shows a compositional bias: basic and acidic residues. The bZIP domain occupies 44-107 (DQKTLRRLAQ…GTGDQAHSTG (64 aa)). 2 coiled-coil regions span residues 45-142 (QKTL…HAGD) and 217-244 (INNLQQTSQQAEDALSQGMESLQQSLAD). The interval 46–66 (KTLRRLAQNREAARKSRLRKK) is basic motif. The segment at 72–86 (LENSRLKLTQLEQEL) is leucine-zipper. Residues 111–327 (ALAFDAEHSR…RALSSLWLAR (217 aa)) form the DOG1 domain.

The protein belongs to the bZIP family. Binds DNA as a dimer. Interacts with NPR1, NPR3 and NPR4. Interacts with GRXC7/ROXY1 and GRXC9/GRX480. Expressed in the whole plant.

The protein localises to the nucleus. In terms of biological role, transcriptional activator that binds specifically to the DNA sequence 5'-TGACG-3'. Recognizes ocs elements like the as-1 motif of the cauliflower mosaic virus 35S promoter. Binding to the as-1-like cis elements mediate auxin- and salicylic acid-inducible transcription. Required to induce the systemic acquired resistance (SAR) via the regulation of pathogenesis-related genes expression. Binding to the as-1 element of PR-1 promoter is salicylic acid-inducible and mediated by NPR1. Could also bind to the C-boxes (5'-ATGACGTCAT-3') with high affinity. This Arabidopsis thaliana (Mouse-ear cress) protein is Transcription factor TGA2 (TGA2).